The primary structure comprises 326 residues: Protein TMED8 (326 aa).

The segment at 1–80 is disordered; the sequence is MSDLQAAEGP…VSPGSKDATE (80 aa). Positions 160-324 constitute a GOLD domain; the sequence is PPCIWTFAKV…NKTLYFHIYY (165 aa). Lysine 170 is subject to N6-acetyllysine. The interval 238-268 is disordered; that stretch reads DSCDDEDEEEEEEEEIEEPVPAGDVERGSRS. Residues 239–255 show a composition bias toward acidic residues; it reads SCDDEDEEEEEEEEIEE.

The protein is Protein TMED8 (TMED8) of Pongo abelii (Sumatran orangutan).